A 515-amino-acid polypeptide reads, in one-letter code: Bifunctional purine biosynthesis protein PurH (515 aa).

The 145-residue stretch at 1-145 (MTKRVLISVS…KNHASVTVVV (145 aa)) folds into the MGS-like domain.

The protein belongs to the PurH family.

The catalysed reaction is (6R)-10-formyltetrahydrofolate + 5-amino-1-(5-phospho-beta-D-ribosyl)imidazole-4-carboxamide = 5-formamido-1-(5-phospho-D-ribosyl)imidazole-4-carboxamide + (6S)-5,6,7,8-tetrahydrofolate. It catalyses the reaction IMP + H2O = 5-formamido-1-(5-phospho-D-ribosyl)imidazole-4-carboxamide. Its pathway is purine metabolism; IMP biosynthesis via de novo pathway; 5-formamido-1-(5-phospho-D-ribosyl)imidazole-4-carboxamide from 5-amino-1-(5-phospho-D-ribosyl)imidazole-4-carboxamide (10-formyl THF route): step 1/1. It functions in the pathway purine metabolism; IMP biosynthesis via de novo pathway; IMP from 5-formamido-1-(5-phospho-D-ribosyl)imidazole-4-carboxamide: step 1/1. This Streptococcus pneumoniae serotype 19F (strain G54) protein is Bifunctional purine biosynthesis protein PurH.